Here is a 631-residue protein sequence, read N- to C-terminus: Alpha-dioxygenase 2 (631 aa).

The N-terminal stretch at 1-20 (MGFSPSSSWFLHPQLHHVVS) is a signal peptide. Residue histidine 157 participates in heme b binding. The active-site Proton acceptor is tyrosine 378. Histidine 381 lines the heme b pocket. The N-linked (GlcNAc...) asparagine glycan is linked to asparagine 583.

The protein belongs to the peroxidase family. Requires heme b as cofactor. In terms of tissue distribution, expressed in seedlings (cotyledons, young leaves, and hypocotyls), flowers, siliques and old leaves.

Its function is as follows. Alpha-dioxygenase that catalyzes the primary oxygenation of fatty acids into oxylipins. May be involved in the senescence process. In Arabidopsis thaliana (Mouse-ear cress), this protein is Alpha-dioxygenase 2 (DOX2).